Consider the following 105-residue polypeptide: Vacuolar ATPase assembly integral membrane protein VMA21 homolog (105 aa).

The segment at 1 to 26 (MSTKNKKAAGGNGGAPKQTRQQSHDS) is disordered. Over 1–36 (MSTKNKKAAGGNGGAPKQTRQQSHDSQDYSSFKTVL) the chain is Cytoplasmic. Residues 37–57 (FYCMLIVFLPVLTFFVLKGFV) form a helical membrane-spanning segment. The Lumenal segment spans residues 58–68 (LDQFLDISEVK). The chain crosses the membrane as a helical span at residues 69-89 (VNIASAVGAVVALHIALGLYI). The Cytoplasmic segment spans residues 90 to 105 (YRAYFGAPGSKGSKTD).

Belongs to the VMA21 family.

It localises to the endoplasmic reticulum membrane. The protein localises to the endoplasmic reticulum-Golgi intermediate compartment membrane. The protein resides in the cytoplasmic vesicle. Its subcellular location is the COPII-coated vesicle membrane. Required for the assembly of the V0 complex of the vacuolar ATPase (V-ATPase) in the endoplasmic reticulum. The sequence is that of Vacuolar ATPase assembly integral membrane protein VMA21 homolog from Drosophila simulans (Fruit fly).